The following is a 732-amino-acid chain: Catalase-peroxidase (732 aa).

The tryptophyl-tyrosyl-methioninium (Trp-Tyr) (with M-245) cross-link spans 96–219 (WHSAGTYRIG…LGAVQMGLIY (124 aa)). Histidine 97 acts as the Proton acceptor in catalysis. The tryptophyl-tyrosyl-methioninium (Tyr-Met) (with W-96) cross-link spans 219-245 (YVNPEGPNGHPDPVASGRDIRETFGRM). Histidine 260 contacts heme b.

It belongs to the peroxidase family. Peroxidase/catalase subfamily. As to quaternary structure, homodimer or homotetramer. The cofactor is heme b. Post-translationally, formation of the three residue Trp-Tyr-Met cross-link is important for the catalase, but not the peroxidase activity of the enzyme.

It carries out the reaction H2O2 + AH2 = A + 2 H2O. The enzyme catalyses 2 H2O2 = O2 + 2 H2O. Bifunctional enzyme with both catalase and broad-spectrum peroxidase activity. This chain is Catalase-peroxidase, found in Acaryochloris marina (strain MBIC 11017).